A 1070-amino-acid polypeptide reads, in one-letter code: Carbamoyl phosphate synthase large chain (1070 aa).

The tract at residues 1 to 401 is carboxyphosphate synthetic domain; sequence MPKRDDIKTI…ALLKAVRSLE (401 aa). Residues Arg129, Arg169, Gly175, Gly176, Lys208, Ile210, Glu215, Gly241, Ile242, His243, Gln284, and Glu298 each contribute to the ATP site. Positions 133–327 constitute an ATP-grasp 1 domain; that stretch reads RDLMNELGEP…IAKLAAKIAV (195 aa). Mg(2+) is bound by residues Gln284, Glu298, and Asn300. Residues Gln284, Glu298, and Asn300 each coordinate Mn(2+). The tract at residues 402–546 is oligomerization domain; sequence IGADHLLLEE…YSTYEEENES (145 aa). Residues 547–929 are carbamoyl phosphate synthetic domain; sequence TRSAKESVIV…ALYKGFVASG (383 aa). In terms of domain architecture, ATP-grasp 2 spans 671–861; sequence EKALEILQIP…MANVATRVIL (191 aa). ATP contacts are provided by Arg707, Arg746, Val748, Glu752, Gly777, Val778, His779, Ser780, Gln820, and Glu832. Gln820, Glu832, and Asn834 together coordinate Mg(2+). 3 residues coordinate Mn(2+): Gln820, Glu832, and Asn834. The 141-residue stretch at 930-1070 folds into the MGS-like domain; that stretch reads TTMHDYGTVL…SEVKQPKARV (141 aa). Residues 930-1070 are allosteric domain; it reads TTMHDYGTVL…SEVKQPKARV (141 aa).

The protein belongs to the CarB family. Composed of two chains; the small (or glutamine) chain promotes the hydrolysis of glutamine to ammonia, which is used by the large (or ammonia) chain to synthesize carbamoyl phosphate. Tetramer of heterodimers (alpha,beta)4. It depends on Mg(2+) as a cofactor. The cofactor is Mn(2+).

It carries out the reaction hydrogencarbonate + L-glutamine + 2 ATP + H2O = carbamoyl phosphate + L-glutamate + 2 ADP + phosphate + 2 H(+). The catalysed reaction is hydrogencarbonate + NH4(+) + 2 ATP = carbamoyl phosphate + 2 ADP + phosphate + 2 H(+). The protein operates within amino-acid biosynthesis; L-arginine biosynthesis; carbamoyl phosphate from bicarbonate: step 1/1. It functions in the pathway pyrimidine metabolism; UMP biosynthesis via de novo pathway; (S)-dihydroorotate from bicarbonate: step 1/3. Large subunit of the glutamine-dependent carbamoyl phosphate synthetase (CPSase). CPSase catalyzes the formation of carbamoyl phosphate from the ammonia moiety of glutamine, carbonate, and phosphate donated by ATP, constituting the first step of 2 biosynthetic pathways, one leading to arginine and/or urea and the other to pyrimidine nucleotides. The large subunit (synthetase) binds the substrates ammonia (free or transferred from glutamine from the small subunit), hydrogencarbonate and ATP and carries out an ATP-coupled ligase reaction, activating hydrogencarbonate by forming carboxy phosphate which reacts with ammonia to form carbamoyl phosphate. The sequence is that of Carbamoyl phosphate synthase large chain from Listeria monocytogenes serotype 4a (strain HCC23).